The primary structure comprises 268 residues: Imidazole glycerol phosphate synthase subunit HisF (268 aa).

Active-site residues include Asp12 and Asp131.

Belongs to the HisA/HisF family. In terms of assembly, heterodimer of HisH and HisF.

It is found in the cytoplasm. The catalysed reaction is 5-[(5-phospho-1-deoxy-D-ribulos-1-ylimino)methylamino]-1-(5-phospho-beta-D-ribosyl)imidazole-4-carboxamide + L-glutamine = D-erythro-1-(imidazol-4-yl)glycerol 3-phosphate + 5-amino-1-(5-phospho-beta-D-ribosyl)imidazole-4-carboxamide + L-glutamate + H(+). It participates in amino-acid biosynthesis; L-histidine biosynthesis; L-histidine from 5-phospho-alpha-D-ribose 1-diphosphate: step 5/9. IGPS catalyzes the conversion of PRFAR and glutamine to IGP, AICAR and glutamate. The HisF subunit catalyzes the cyclization activity that produces IGP and AICAR from PRFAR using the ammonia provided by the HisH subunit. This chain is Imidazole glycerol phosphate synthase subunit HisF, found in Salinibacter ruber (strain DSM 13855 / M31).